A 223-amino-acid polypeptide reads, in one-letter code: Probable cytokinin riboside 5'-monophosphate phosphoribohydrolase LOGL1 (223 aa).

Substrate-binding positions include Glu-89, 107-108, 124-130, and Thr-136; these read RK and GYGTMEE. A disordered region spans residues 201 to 223; that stretch reads QEVAPRTSWEMSELGYGKTPEES.

Belongs to the LOG family. In terms of tissue distribution, expressed in shoot apex, immature inflorescences and flowers.

It catalyses the reaction N(6)-(dimethylallyl)adenosine 5'-phosphate + H2O = N(6)-dimethylallyladenine + D-ribose 5-phosphate. It carries out the reaction 9-ribosyl-trans-zeatin 5'-phosphate + H2O = trans-zeatin + D-ribose 5-phosphate. Functionally, cytokinin-activating enzyme working in the direct activation pathway. Phosphoribohydrolase that converts inactive cytokinin nucleotides to the biologically active free-base forms. In Oryza sativa subsp. japonica (Rice), this protein is Probable cytokinin riboside 5'-monophosphate phosphoribohydrolase LOGL1 (LOGL1).